A 319-amino-acid polypeptide reads, in one-letter code: High mobility group B protein 10 (319 aa).

The span at Met-1–His-13 shows a compositional bias: polar residues. The interval Met-1–Lys-25 is disordered. In terms of domain architecture, ARID spans Val-40–Tyr-131. The segment covering Pro-203 to Ser-220 has biased composition (polar residues). The disordered stretch occupies residues Pro-203–Leu-230. Positions Pro-238–Lys-305 form a DNA-binding region, HMG box.

Ubiquitously expressed.

The protein localises to the nucleus. Binds preferentially DNA with A/T-rich content. The chain is High mobility group B protein 10 (HMGB10) from Arabidopsis thaliana (Mouse-ear cress).